The chain runs to 78 residues: Acyl carrier protein AcpP (78 aa).

The Carrier domain occupies 2-77 (SDIAERVKKI…DAVKFIEKAQ (76 aa)). At S37 the chain carries O-(pantetheine 4'-phosphoryl)serine.

It belongs to the acyl carrier protein (ACP) family. In terms of processing, 4'-phosphopantetheine is transferred from CoA to a specific serine of apo-ACP by AcpS. This modification is essential for activity because fatty acids are bound in thioester linkage to the sulfhydryl of the prosthetic group.

The protein localises to the cytoplasm. It functions in the pathway lipid metabolism; fatty acid biosynthesis. Its function is as follows. Carrier of the growing fatty acid chain in fatty acid biosynthesis. The chain is Acyl carrier protein AcpP from Agrobacterium fabrum (strain C58 / ATCC 33970) (Agrobacterium tumefaciens (strain C58)).